Reading from the N-terminus, the 349-residue chain is UDP-N-acetylenolpyruvoylglucosamine reductase (349 aa).

One can recognise an FAD-binding PCMH-type domain in the interval 26-197; sequence FDARARVAAR…VAVTFRLPKA (172 aa). Arginine 173 is a catalytic residue. Serine 249 (proton donor) is an active-site residue. The active site involves glutamate 345.

It belongs to the MurB family. The cofactor is FAD.

The protein localises to the cytoplasm. The catalysed reaction is UDP-N-acetyl-alpha-D-muramate + NADP(+) = UDP-N-acetyl-3-O-(1-carboxyvinyl)-alpha-D-glucosamine + NADPH + H(+). It participates in cell wall biogenesis; peptidoglycan biosynthesis. Cell wall formation. The sequence is that of UDP-N-acetylenolpyruvoylglucosamine reductase from Burkholderia pseudomallei (strain K96243).